The following is a 148-amino-acid chain: SsrA-binding protein (148 aa).

Positions glutamine 124–alanine 148 are disordered.

Belongs to the SmpB family.

Its subcellular location is the cytoplasm. Its function is as follows. Required for rescue of stalled ribosomes mediated by trans-translation. Binds to transfer-messenger RNA (tmRNA), required for stable association of tmRNA with ribosomes. tmRNA and SmpB together mimic tRNA shape, replacing the anticodon stem-loop with SmpB. tmRNA is encoded by the ssrA gene; the 2 termini fold to resemble tRNA(Ala) and it encodes a 'tag peptide', a short internal open reading frame. During trans-translation Ala-aminoacylated tmRNA acts like a tRNA, entering the A-site of stalled ribosomes, displacing the stalled mRNA. The ribosome then switches to translate the ORF on the tmRNA; the nascent peptide is terminated with the 'tag peptide' encoded by the tmRNA and targeted for degradation. The ribosome is freed to recommence translation, which seems to be the essential function of trans-translation. This Ralstonia pickettii (strain 12J) protein is SsrA-binding protein.